The primary structure comprises 474 residues: tRNA-2-methylthio-N(6)-dimethylallyladenosine synthase (474 aa).

The 118-residue stretch at 3–120 (KKLHIKTWGC…LPEMIDQVQR (118 aa)) folds into the MTTase N-terminal domain. 6 residues coordinate [4Fe-4S] cluster: cysteine 12, cysteine 49, cysteine 83, cysteine 157, cysteine 161, and cysteine 164. A Radical SAM core domain is found at 143–375 (RADGPTAFVS…QDRITQQAMR (233 aa)). The region spanning 378–441 (RQMLGTVQRI…TNSLRGIFIR (64 aa)) is the TRAM domain.

This sequence belongs to the methylthiotransferase family. MiaB subfamily. Monomer. The cofactor is [4Fe-4S] cluster.

It is found in the cytoplasm. It catalyses the reaction N(6)-dimethylallyladenosine(37) in tRNA + (sulfur carrier)-SH + AH2 + 2 S-adenosyl-L-methionine = 2-methylsulfanyl-N(6)-dimethylallyladenosine(37) in tRNA + (sulfur carrier)-H + 5'-deoxyadenosine + L-methionine + A + S-adenosyl-L-homocysteine + 2 H(+). Catalyzes the methylthiolation of N6-(dimethylallyl)adenosine (i(6)A), leading to the formation of 2-methylthio-N6-(dimethylallyl)adenosine (ms(2)i(6)A) at position 37 in tRNAs that read codons beginning with uridine. This is tRNA-2-methylthio-N(6)-dimethylallyladenosine synthase from Shewanella denitrificans (strain OS217 / ATCC BAA-1090 / DSM 15013).